The following is a 701-amino-acid chain: Elongation factor G 2 (701 aa).

One can recognise a tr-type G domain in the interval 8 to 291 (ERYRNIGISA…AVIDYLPSPA (284 aa)). Residues 17–24 (AHIDAGKT), 88–92 (DTPGH), and 142–145 (NKMD) contribute to the GTP site.

Belongs to the TRAFAC class translation factor GTPase superfamily. Classic translation factor GTPase family. EF-G/EF-2 subfamily.

It is found in the cytoplasm. Catalyzes the GTP-dependent ribosomal translocation step during translation elongation. During this step, the ribosome changes from the pre-translocational (PRE) to the post-translocational (POST) state as the newly formed A-site-bound peptidyl-tRNA and P-site-bound deacylated tRNA move to the P and E sites, respectively. Catalyzes the coordinated movement of the two tRNA molecules, the mRNA and conformational changes in the ribosome. The chain is Elongation factor G 2 from Burkholderia lata (strain ATCC 17760 / DSM 23089 / LMG 22485 / NCIMB 9086 / R18194 / 383).